The sequence spans 494 residues: V-type proton ATPase subunit B (494 aa).

It belongs to the ATPase alpha/beta chains family. As to quaternary structure, V-ATPase is a heteromultimeric enzyme composed of a peripheral catalytic V1 complex (main components: subunits A, B, C, D, E, and F) attached to an integral membrane V0 proton pore complex (main component: the proteolipid protein).

Functionally, non-catalytic subunit of the peripheral V1 complex of vacuolar ATPase. V-ATPase is responsible for acidifying a variety of intracellular compartments in eukaryotic cells. The polypeptide is V-type proton ATPase subunit B (VAPB) (Plasmodium falciparum).